The chain runs to 292 residues: Carbapenem-hydrolyzing beta-lactamase transcriptional activator (292 aa).

The HTH lysR-type domain occupies 5 to 62 (IPLNALRAFEASARYLNFTKAGLELHVSQAAVSQHVRTLEAILGVNLFKRLPRGLQLT). Positions 22-41 (FTKAGLELHVSQAAVSQHVR) form a DNA-binding region, H-T-H motif.

Belongs to the LysR transcriptional regulatory family.

Its function is as follows. This protein is a positive regulator of gene expression of carbapenem-hydrolyzing beta-lactamase (smeA). Seems to also be a repressor of its own transcription. In Serratia marcescens, this protein is Carbapenem-hydrolyzing beta-lactamase transcriptional activator (smeR).